Consider the following 726-residue polypeptide: Catalase-peroxidase (726 aa).

Residues 1-33 form a disordered region; it reads MSTSDDIHNTTATGKCPFHQGGHDQSAGAGTTT. The tryptophyl-tyrosyl-methioninium (Trp-Tyr) (with M-252) cross-link spans 105–226; that stretch reads WHGAGTYRSI…LGATEMGLIY (122 aa). Catalysis depends on histidine 106, which acts as the Proton acceptor. A cross-link (tryptophyl-tyrosyl-methioninium (Tyr-Met) (with W-105)) is located at residues 226–252; it reads YVNPEGPDHSGEPLSAAAAIRATFGNM. Position 267 (histidine 267) interacts with heme b.

The protein belongs to the peroxidase family. Peroxidase/catalase subfamily. As to quaternary structure, homodimer or homotetramer. Heme b serves as cofactor. Post-translationally, formation of the three residue Trp-Tyr-Met cross-link is important for the catalase, but not the peroxidase activity of the enzyme.

It catalyses the reaction H2O2 + AH2 = A + 2 H2O. The catalysed reaction is 2 H2O2 = O2 + 2 H2O. In terms of biological role, bifunctional enzyme with both catalase and broad-spectrum peroxidase activity. In Shigella boydii serotype 4 (strain Sb227), this protein is Catalase-peroxidase.